Reading from the N-terminus, the 339-residue chain is Anthranilate phosphoribosyltransferase (339 aa).

5-phospho-alpha-D-ribose 1-diphosphate is bound by residues Gly-81, 84-85 (GD), Ser-89, 91-94 (NVSS), 109-117 (KHGNRALSS), and Ala-121. Gly-81 is an anthranilate binding site. A Mg(2+)-binding site is contributed by Ser-93. Asn-112 is a binding site for anthranilate. Arg-167 contacts anthranilate. Mg(2+)-binding residues include Asp-225 and Glu-226.

Belongs to the anthranilate phosphoribosyltransferase family. In terms of assembly, homodimer. The cofactor is Mg(2+).

The enzyme catalyses N-(5-phospho-beta-D-ribosyl)anthranilate + diphosphate = 5-phospho-alpha-D-ribose 1-diphosphate + anthranilate. It participates in amino-acid biosynthesis; L-tryptophan biosynthesis; L-tryptophan from chorismate: step 2/5. Catalyzes the transfer of the phosphoribosyl group of 5-phosphorylribose-1-pyrophosphate (PRPP) to anthranilate to yield N-(5'-phosphoribosyl)-anthranilate (PRA). This Brucella abortus (strain S19) protein is Anthranilate phosphoribosyltransferase.